The chain runs to 482 residues: Serine carboxypeptidase-like 26 (482 aa).

Positions 1-28 (MAVAAAAAARRRDVSCLLLLLCFSSSMA) are cleaved as a signal peptide. 3 cysteine pairs are disulfide-bonded: Cys101–Cys366, Cys263–Cys274, and Cys298–Cys333. The N-linked (GlcNAc...) asparagine glycan is linked to Asn152. Ser194 is a catalytic residue. 4 N-linked (GlcNAc...) asparagine glycosylation sites follow: Asn269, Asn301, Asn354, and Asn375. Active-site residues include Asp403 and His455.

It belongs to the peptidase S10 family.

The protein localises to the secreted. Its function is as follows. Acts as a positive regulator of grain size by controlling grain width, filling and weight. High expression of GS5 in the grain is correlated with large grain size. This is Serine carboxypeptidase-like 26 from Oryza sativa subsp. japonica (Rice).